A 475-amino-acid chain; its full sequence is Putative aldehyde dehydrogenase (475 aa).

NAD(+) is bound by residues 146-147 and 223-224; these read WN and GS. The active-site Proton acceptor is the Glu245. Leu246 serves as a coordination point for NAD(+). Cys279 acts as the Nucleophile in catalysis. Glu379 contributes to the NAD(+) binding site.

The protein belongs to the aldehyde dehydrogenase family.

It catalyses the reaction an aldehyde + NAD(+) + H2O = a carboxylate + NADH + 2 H(+). The sequence is that of Putative aldehyde dehydrogenase from Staphylococcus aureus (strain MSSA476).